A 430-amino-acid polypeptide reads, in one-letter code: Serine hydroxymethyltransferase (430 aa).

Residues L123 and 127-129 (GHL) each bind (6S)-5,6,7,8-tetrahydrofolate. N6-(pyridoxal phosphate)lysine is present on K232. (6S)-5,6,7,8-tetrahydrofolate is bound at residue E248.

This sequence belongs to the SHMT family. As to quaternary structure, homodimer. It depends on pyridoxal 5'-phosphate as a cofactor.

It is found in the cytoplasm. It carries out the reaction (6R)-5,10-methylene-5,6,7,8-tetrahydrofolate + glycine + H2O = (6S)-5,6,7,8-tetrahydrofolate + L-serine. It participates in one-carbon metabolism; tetrahydrofolate interconversion. Its pathway is amino-acid biosynthesis; glycine biosynthesis; glycine from L-serine: step 1/1. Catalyzes the reversible interconversion of serine and glycine with tetrahydrofolate (THF) serving as the one-carbon carrier. This reaction serves as the major source of one-carbon groups required for the biosynthesis of purines, thymidylate, methionine, and other important biomolecules. Also exhibits THF-independent aldolase activity toward beta-hydroxyamino acids, producing glycine and aldehydes, via a retro-aldol mechanism. In Anaplasma marginale (strain St. Maries), this protein is Serine hydroxymethyltransferase.